The sequence spans 871 residues: Translation initiation factor IF-2 (871 aa).

Disordered stretches follow at residues 60–101 (KKNI…QEVK) and 184–203 (ESLKKKKKEKKSFVASKKES). Basic residues predominate over residues 61 to 72 (KNIKTPTAKKPK). The span at 73-101 (KENIKEQEKLNESEKKEPKKEEKLKQEVK) shows a compositional bias: basic and acidic residues. Positions 370 to 537 (TRAPVITIMG…IVLLQADILE (168 aa)) constitute a tr-type G domain. Positions 379 to 386 (GHVDHGKT) are G1. 379-386 (GHVDHGKT) serves as a coordination point for GTP. Residues 404 to 408 (GITQH) are G2. Residues 425–428 (DTPG) are G3. Residues 425–429 (DTPGH) and 479–482 (NKMD) contribute to the GTP site. A G4 region spans residues 479–482 (NKMD). Residues 515–517 (SAK) form a G5 region.

It belongs to the TRAFAC class translation factor GTPase superfamily. Classic translation factor GTPase family. IF-2 subfamily.

The protein localises to the cytoplasm. One of the essential components for the initiation of protein synthesis. Protects formylmethionyl-tRNA from spontaneous hydrolysis and promotes its binding to the 30S ribosomal subunits. Also involved in the hydrolysis of GTP during the formation of the 70S ribosomal complex. The sequence is that of Translation initiation factor IF-2 from Campylobacter jejuni subsp. jejuni serotype O:6 (strain 81116 / NCTC 11828).